The primary structure comprises 753 residues: Nigerose phosphorylase (753 aa).

348–349 (WD) serves as a coordination point for substrate. The Proton donor role is filled by glutamate 490. Residue 604–605 (KQ) participates in substrate binding.

This sequence belongs to the glycosyl hydrolase 65 family. As to quaternary structure, homodimer.

It is found in the cytoplasm. It carries out the reaction nigerose + phosphate = beta-D-glucose 1-phosphate + D-glucose. Its activity is regulated as follows. Does not require divalent metal ions. Catalyzes the reversible phosphorolysis of nigerose. Also shows a weak activity on kojibiose. The chain is Nigerose phosphorylase from Lachnoclostridium phytofermentans (strain ATCC 700394 / DSM 18823 / ISDg) (Clostridium phytofermentans).